The following is a 1055-amino-acid chain: Ubiquitin carboxyl-terminal hydrolase 25 (1055 aa).

The 44-residue stretch at 14–57 (QKHQQTFLNQLREITGINDTQILQQALKDSNGNLELAVAFLTAK) folds into the UBA-like domain. Positions 77–102 (NDRYISVGSQADTNVIDLTGDDKDDL) are SUMO interaction domain (SIM). Position 85 is a phosphoserine (serine 85). Positions 89–95 (TNVIDLT) match the Required for SUMO paralog-specific binding motif. 2 consecutive UIM domains span residues 97-116 (DDKD…SNRA) and 123-140 (TDEE…IAEN). A Glycyl lysine isopeptide (Lys-Gly) (interchain with G-Cter in SUMO); alternate cross-link involves residue lysine 99. Lysine 99 participates in a covalent cross-link: Glycyl lysine isopeptide (Lys-Gly) (interchain with G-Cter in ubiquitin); alternate. Residues 169–657 (VGLKNVGNTC…SAYCLMYIND (489 aa)) enclose the USP domain. Cysteine 178 is a catalytic residue. Positions 464 to 507 (VCTSPVDDIDASSPPSGSIPSQTLPSTTEQQGALSSELPSTSPS) are disordered. Polar residues predominate over residues 476 to 496 (SPPSGSIPSQTLPSTTEQQGA). Residues 497–507 (LSSELPSTSPS) are compositionally biased toward low complexity. Residues 541–578 (TEEELSVLESCLHRWRTEIENDTRDLQESISRIHRTIE) are a coiled coil. Residues histidine 599 and histidine 607 contribute to the active site. Positions 684-717 (DLRDFVEEDNQRFEKELEEWDAQLAQKALQEKLL) form a coiled coil. The interval 727–749 (TSVTTAQAAGDPEYLEQPSRSDF) is disordered. Tyrosine 740 carries the post-translational modification Phosphotyrosine.

Belongs to the peptidase C19 family. Homotetramer, inhibited form. Homodimer, active form. Interacts with ACTA1 (via its C-terminus); the interaction occurs for all isoforms but is strongest for isoform USP25m in muscle differentiating cells. Interacts (isoform USP25m only) with MYBPC1; the interaction prevents proteasomal degradation of MYBPC1. Interacts (isoform USP25m only) with FLNC (via filament repeats 17-18, 20-21 and 24). Interacts with GAPDH. Interacts with SUMO3; the interaction sumoylates efficiently USP25. Interacts with SUMO2; the interaction sumoylates efficiently USP25. Interacts with SUMO1; the interaction only weakly sumoylates USP25. Interacts with SYK; phosphorylates USP25 and regulates USP25 intracellular levels. Acetylated. Post-translationally, sumoylation impairs binding to and hydrolysis of ubiquitin chains. Sumoylated preferentially with SUMO2 or SUMO3. Desumoylated by SENP1. Polyubiquitinated by SMURF1 by promoting the 'Lys-48'-linkage leading to proteasomal degradation. In terms of processing, preferentially monoubiquitinated but can also be polyubiquitinated. Autodeubiquitinated. Ubiquitination activates the enzymatic activity either by preventing sumoylation or by allowing novel interactions. Phosphorylation in the C-terminal by SYK regulates USP25 cellular levels. In terms of tissue distribution, isoform USP25a is found in most adult and fetal tissues; expression is moderately high in testis, pancreas, kidney, skeletal muscle, liver, lung, placenta, heart, but very low in peripheral blood, colon, small intestine, ovary, prostate, thymus and spleen. Expressed in the brain, with high levels in the cerebral cortex. Isoform USP25b is found in all tissues except heart and skeletal muscle. Isoform USP25m is heart and skeletal muscle specific.

It localises to the cytoplasm. It is found in the nucleus. The catalysed reaction is Thiol-dependent hydrolysis of ester, thioester, amide, peptide and isopeptide bonds formed by the C-terminal Gly of ubiquitin (a 76-residue protein attached to proteins as an intracellular targeting signal).. Functionally, deubiquitinating enzyme that hydrolyzes ubiquitin moieties conjugated to substrates and thus, functions in various biological processes including inflammation and immune response. Modulates the Wnt/beta-catenin pathway by deubiquitinating and stabilizing tankyrases TNKS1 and TNKS2. Regulates KEAP1-NRF2 axis in the defense against oxidative assaults by deubiquitinating KEAP1 and protecting it from degradation leading to degradation of the NRF2 transcription factor that is responsible for mounting an anti-oxidation gene expression program. Positively regulates RNA virus-induced innate signaling by interacting with and deubiquitinating ERLIN1 and ERLIN2. In turn, restricts virus production by regulating cholesterol biosynthetic flux. Acts as a negative regulator of interleukin-17-mediated signaling and inflammation through the removal of 'Lys-63'-linked ubiquitination of TRAF5 and TRAF6. Prevents the ubiquitination and degradation of TRAF3 to reduce the phosphorylation levels of JNK and P38, the secretion of IL-1B and to induce endotoxin tolerance. Its function is as follows. The muscle-specific isoform (USP25m) may have a role in the regulation of muscular differentiation and function. The protein is Ubiquitin carboxyl-terminal hydrolase 25 (USP25) of Homo sapiens (Human).